We begin with the raw amino-acid sequence, 409 residues long: TNF receptor-associated factor family protein DDB_G0273435/DDB_G0273505 (409 aa).

The segment at 20-59 (CQLCCNLMNESVSCPNGHCLCKGCFHKQIETVKSECPICC) adopts an RING-type; degenerate zinc-finger fold. TRAF-type zinc fingers lie at residues 75–145 (KHIN…EIEN) and 145–201 (NHQD…HELS). Residues 221-250 (HQSLLKSTSKQLKQLRSSCEELETKLINND) adopt a coiled-coil conformation. The MATH domain occupies 252–380 (SFNGRWIIKQ…NDQLIIKFNI (129 aa)).

This sequence belongs to the TNF receptor-associated factor family. A subfamily.

The protein localises to the cytoplasm. In terms of biological role, probable adapter protein and signal transducer that links members of the tumor necrosis factor receptor family to different signaling pathways by association with the receptor cytoplasmic domain and kinases. The polypeptide is TNF receptor-associated factor family protein DDB_G0273435/DDB_G0273505 (Dictyostelium discoideum (Social amoeba)).